Here is a 1367-residue protein sequence, read N- to C-terminus: Mediator of RNA polymerase II transcription subunit 23 (1367 aa).

The disordered stretch occupies residues 1343-1367; it reads PPQALNSGSPAPQSNQVPASLPVTQ. A compositionally biased stretch (polar residues) spans 1346 to 1367; sequence ALNSGSPAPQSNQVPASLPVTQ.

Belongs to the Mediator complex subunit 23 family. As to quaternary structure, component of the Mediator complex, which is composed of MED1, MED4, MED6, MED7, MED8, MED9, MED10, MED11, MED12, MED13, MED13L, MED14, MED15, MED16, MED17, MED18, MED19, MED20, MED21, MED22, MED23, MED24, MED25, MED26, MED27, MED29, MED30, MED31, CCNC, CDK8 and CDC2L6/CDK11. The MED12, MED13, CCNC and CDK8 subunits form a distinct module termed the CDK8 module. Mediator containing the CDK8 module is less active than Mediator lacking this module in supporting transcriptional activation. Individual preparations of the Mediator complex lacking one or more distinct subunits have been variously termed ARC, CRSP, DRIP, PC2, SMCC and TRAP. Interacts with CEBPB (when not methylated), CTNNB1, and GLI3. Interacts with CDK8 and ELK1.

Its subcellular location is the nucleus. Functionally, component of the Mediator complex, a coactivator involved in the regulated transcription of nearly all RNA polymerase II-dependent genes. Mediator functions as a bridge to convey information from gene-specific regulatory proteins to the basal RNA polymerase II transcription machinery. Mediator is recruited to promoters by direct interactions with regulatory proteins and serves as a scaffold for the assembly of a functional pre-initiation complex with RNA polymerase II and the general transcription factors. Also required for transcriptional activation subsequent to the assembly of the pre-initiation complex. Required for transcriptional activation by adenovirus E1A protein. Required for ELK1-dependent transcriptional activation in response to activated Ras signaling. This chain is Mediator of RNA polymerase II transcription subunit 23 (Med23), found in Mus musculus (Mouse).